A 324-amino-acid polypeptide reads, in one-letter code: 2,3,4,5-tetrahydropyridine-2,6-dicarboxylate N-succinyltransferase (324 aa).

Residues Asp173 and Glu190 each coordinate Mg(2+). Glu206 (acyl-anhydride intermediate) is an active-site residue. Succinyl-CoA contacts are provided by residues Arg208, Gly223, Ser226, Ala249, 264–265 (EA), Gly272, Lys284, and 297–300 (RRNS).

The protein belongs to the type 2 tetrahydrodipicolinate N-succinyltransferase family. Homotrimer.

It is found in the cytoplasm. The enzyme catalyses (S)-2,3,4,5-tetrahydrodipicolinate + succinyl-CoA + H2O = (S)-2-succinylamino-6-oxoheptanedioate + CoA. It participates in amino-acid biosynthesis; L-lysine biosynthesis via DAP pathway; LL-2,6-diaminopimelate from (S)-tetrahydrodipicolinate (succinylase route): step 1/3. Functionally, catalyzes the conversion of the cyclic tetrahydrodipicolinate (THDP) into the acyclic N-succinyl-L-2-amino-6-oxopimelate using succinyl-CoA. The chain is 2,3,4,5-tetrahydropyridine-2,6-dicarboxylate N-succinyltransferase from Geodermatophilus obscurus (strain ATCC 25078 / DSM 43160 / JCM 3152 / CCUG 61914 / KCC A-0152 / KCTC 9177 / NBRC 13315 / NRRL B-3577 / G-20).